Here is a 249-residue protein sequence, read N- to C-terminus: Cytoplasmic envelopment protein 1 (249 aa).

This sequence belongs to the herpesviridae cytoplasmic envelopment protein 1 family.

The protein localises to the virion. The protein resides in the virion tegument. It is found in the host cytoplasm. It localises to the host Golgi apparatus. Plays a critical role in cytoplasmic virus egress. Participates in the final step of tegumentation and envelope acquisition within the host cytoplasm. The chain is Cytoplasmic envelopment protein 1 (U75) from Human herpesvirus 6A (strain Uganda-1102) (HHV-6 variant A).